The chain runs to 81 residues: Large ribosomal subunit protein bL27m (81 aa).

The span at 1–11 (MATKKSGGSSR) shows a compositional bias: polar residues. The tract at residues 1 to 20 (MATKKSGGSSRNGRDSKGRR) is disordered.

It belongs to the bacterial ribosomal protein bL27 family.

The protein localises to the mitochondrion. The chain is Large ribosomal subunit protein bL27m (RPL27) from Reclinomonas americana.